The chain runs to 353 residues: Quinolinate synthase (353 aa).

His-47 and Ser-68 together coordinate iminosuccinate. Cys-113 is a binding site for [4Fe-4S] cluster. Iminosuccinate contacts are provided by residues 139–141 and Ser-156; that span reads YAN. Cys-200 lines the [4Fe-4S] cluster pocket. Iminosuccinate is bound by residues 226–228 and Thr-243; that span reads HPE. A [4Fe-4S] cluster-binding site is contributed by Cys-297.

It belongs to the quinolinate synthase family. Type 1 subfamily. Requires [4Fe-4S] cluster as cofactor.

The protein localises to the cytoplasm. It carries out the reaction iminosuccinate + dihydroxyacetone phosphate = quinolinate + phosphate + 2 H2O + H(+). Its pathway is cofactor biosynthesis; NAD(+) biosynthesis; quinolinate from iminoaspartate: step 1/1. Its function is as follows. Catalyzes the condensation of iminoaspartate with dihydroxyacetone phosphate to form quinolinate. In Erwinia tasmaniensis (strain DSM 17950 / CFBP 7177 / CIP 109463 / NCPPB 4357 / Et1/99), this protein is Quinolinate synthase.